Consider the following 179-residue polypeptide: Peptide deformylase 2 (179 aa).

The Fe cation site is built by Cys-104 and His-146. Residue Glu-147 is part of the active site. Fe cation is bound at residue His-150.

It belongs to the polypeptide deformylase family. Fe(2+) is required as a cofactor.

It carries out the reaction N-terminal N-formyl-L-methionyl-[peptide] + H2O = N-terminal L-methionyl-[peptide] + formate. Functionally, removes the formyl group from the N-terminal Met of newly synthesized proteins. Requires at least a dipeptide for an efficient rate of reaction. N-terminal L-methionine is a prerequisite for activity but the enzyme has broad specificity at other positions. The protein is Peptide deformylase 2 of Streptomyces coelicolor (strain ATCC BAA-471 / A3(2) / M145).